We begin with the raw amino-acid sequence, 218 residues long: uncharacterized protein (218 aa).

This is an uncharacterized protein from Methanocaldococcus jannaschii (strain ATCC 43067 / DSM 2661 / JAL-1 / JCM 10045 / NBRC 100440) (Methanococcus jannaschii).